The chain runs to 154 residues: Ribonuclease H (154 aa).

Positions 1–142 constitute an RNase H type-1 domain; it reads MLKKIDLYTD…CDELAREAAS (142 aa). Residues Asp-10, Glu-48, Asp-70, and Asp-134 each contribute to the Mg(2+) site. Residues 133-154 form a disordered region; it reads CDELAREAASGKQLAEDTGYQP.

This sequence belongs to the RNase H family. As to quaternary structure, monomer. Mg(2+) serves as cofactor.

Its subcellular location is the cytoplasm. The catalysed reaction is Endonucleolytic cleavage to 5'-phosphomonoester.. In terms of biological role, endonuclease that specifically degrades the RNA of RNA-DNA hybrids. This is Ribonuclease H from Aeromonas hydrophila subsp. hydrophila (strain ATCC 7966 / DSM 30187 / BCRC 13018 / CCUG 14551 / JCM 1027 / KCTC 2358 / NCIMB 9240 / NCTC 8049).